Consider the following 197-residue polypeptide: Dephospho-CoA kinase (197 aa).

One can recognise a DPCK domain in the interval 5–197; sequence RLGLTGSIGM…IAHIRETADA (193 aa). ATP is bound at residue 13 to 18; that stretch reads GMGKST.

It belongs to the CoaE family.

The protein resides in the cytoplasm. It carries out the reaction 3'-dephospho-CoA + ATP = ADP + CoA + H(+). Its pathway is cofactor biosynthesis; coenzyme A biosynthesis; CoA from (R)-pantothenate: step 5/5. Its function is as follows. Catalyzes the phosphorylation of the 3'-hydroxyl group of dephosphocoenzyme A to form coenzyme A. The protein is Dephospho-CoA kinase of Cereibacter sphaeroides (strain ATCC 17023 / DSM 158 / JCM 6121 / CCUG 31486 / LMG 2827 / NBRC 12203 / NCIMB 8253 / ATH 2.4.1.) (Rhodobacter sphaeroides).